A 222-amino-acid polypeptide reads, in one-letter code: METTNKANTMMAELKTLCNKDNIVLSLSQYEKLVGYALLLEDWNNKINLISRKEDAPILIKHVFHSLLIGLFHQFSSSEKVLDLGTGGGLPGIPLAIAWPDTQFLLVDATGKKIAACQSMIKSLDIKNAVAVHSRVEELKGMSFDTVLSRQVAQLEQLCSYASKILKPGGRLICLKGGNLDHEIKKALAGKKEKGSFPSVVEQFPVSGYSPCFTEKHIVIAR.

Residues Gly85, Leu90, 108-110, 136-137, and Arg150 each bind S-adenosyl-L-methionine; these read DAT and VE.

It belongs to the methyltransferase superfamily. RNA methyltransferase RsmG family.

Its subcellular location is the cytoplasm. Its function is as follows. Specifically methylates the N7 position of a guanine in 16S rRNA. The chain is Ribosomal RNA small subunit methyltransferase G from Chlorobium phaeobacteroides (strain DSM 266 / SMG 266 / 2430).